Reading from the N-terminus, the 255-residue chain is MKIAPVAINHSPLSREVPSHAAPTQAKQTNLQSEAGDLDARKSSASSPETRALLATKTVLGRHKIEVPAFGGWFKKKSSKHETGGSSANADSSSVASDSTEKPLFRLTHVPYVSQGNERMGCWYACARMVGHSVEAGPRLGLPELYEGREGPAGLQDFSDVERFIHNEGLTRVDLPDNERFTHEELGALLYKHGPIIFGWKTPNDSWHMSVLTGVDKETSSITFHDPRQGPDLAMPLDYFNQRLAWQVPHAMLYR.

A disordered region spans residues 1-50 (MKIAPVAINHSPLSREVPSHAAPTQAKQTNLQSEAGDLDARKSSASSPET). A propeptide spans 1-71 (MKIAPVAINH…RHKIEVPAFG (71 aa)) (removed in mature form). Residues 70–71 (FG) form a determinants of cleavage specificity region. Residues 76–100 (KKSSKHETGGSSANADSSSVASDST) form a disordered region. Residues 86–98 (SSANADSSSVASD) are compositionally biased toward low complexity. Catalysis depends on Cys122, which acts as the Nucleophile. Residues His208 and Asp226 contribute to the active site.

This sequence belongs to the peptidase C70 family. As to quaternary structure, interacts physically with plant cell ROC1 (Arabidopsis single-domain cyclophilin) and RIN4. In terms of processing, autocleaved inside plant cells upon activation by cyclophilin. Cleavage is crucial in subcellular location and in eliciting HR. Inhibited by cyclosporin A (cyclophilin inhibitor).

The protein resides in the secreted. It localises to the host cell membrane. In terms of biological role, effector protein involved in gene-for-gene resistance in plants expressing RPS2. Its thiol protease activity is required for the degradation of plant cell RIN4 and consequent activation of RPS2 during bacterial infection. The activation of RPS2 is sufficient for the induction of hypersensitive response (HR) and plant resistance. Cleavage of RIN4 by AvrRpt2 also interferes with RPM1-mediated resistance activated by either AvrRpm1 or AvrB. Contributes to virulence in plants lacking the resistance protein RPS2 promoting pathogen growth and disease symptoms. Inhibits PAMP (pathogen-associated molecular patterns)-induced signaling compromising the host's basal defense system. Blocks plant callose deposition, flg22 (a peptide corresponding to the most conserved domain of flagellin) induced accumulation of PR-1, PR-2 and PR-5 and activation of GST6 transcription. The mechanism of virulence is unknown, but this activity is independent of ethylene and salicylic acid response pathways and independent of RIN4 disappearance. The chain is Cysteine protease avirulence protein AvrRpt2 (avrRpt2) from Pseudomonas syringae pv. tomato.